A 218-amino-acid chain; its full sequence is Acetoacetyl-CoA:acetate/butyrate CoA transferase alpha subunit (218 aa).

Gly-24 to Gly-30 provides a ligand contact to CoA.

This sequence belongs to the 3-oxoacid CoA-transferase subunit A family. In terms of assembly, heterotetramer composed of two alpha subunits (CtfA) and two beta subunits (CtfB).

The enzyme catalyses acetoacetate + butanoyl-CoA = acetoacetyl-CoA + butanoate. The catalysed reaction is acetoacetate + acetyl-CoA = acetoacetyl-CoA + acetate. The acetate and butyrate conversion reactions are inhibited in vitro by physiological levels of acetone and butanol. Catalyzes the transfer of CoA from acetoacetyl-CoA to acetate, butyrate and propionate. Also shows low activity with valerate, isobutyrate and crotonate. Plays an important role in the metabolic shift between the acid-producing and solvent-forming states of C.acetobutylicum. Acts mainly to detoxify the medium by removing the acetate and butyrate excreted earlier in the fermentation. This Clostridium acetobutylicum (strain ATCC 824 / DSM 792 / JCM 1419 / IAM 19013 / LMG 5710 / NBRC 13948 / NRRL B-527 / VKM B-1787 / 2291 / W) protein is Acetoacetyl-CoA:acetate/butyrate CoA transferase alpha subunit.